The primary structure comprises 241 residues: Small ribosomal subunit protein uS3 (241 aa).

One can recognise a KH type-2 domain in the interval 39–107 (MRKFVMDELK…ETHLNIVEVR (69 aa)). Residues 214–241 (ASERRALEGDAQGPASRDRDRDRRRDNA) are disordered. A compositionally biased stretch (basic and acidic residues) spans 229–241 (SRDRDRDRRRDNA).

This sequence belongs to the universal ribosomal protein uS3 family. As to quaternary structure, part of the 30S ribosomal subunit. Forms a tight complex with proteins S10 and S14.

Binds the lower part of the 30S subunit head. Binds mRNA in the 70S ribosome, positioning it for translation. This chain is Small ribosomal subunit protein uS3, found in Rhizobium rhizogenes (strain K84 / ATCC BAA-868) (Agrobacterium radiobacter).